We begin with the raw amino-acid sequence, 983 residues long: Inner tegument protein (983 aa).

An interaction with large tegument protein region spans residues 474–983 (LNVNTHFAVQ…TSVSLPPASP (510 aa)). Positions 901 to 932 (APWESAPQPPRLRMTPDTDHEESTAGATSVPE) are disordered. Residues 914–923 (MTPDTDHEES) are compositionally biased toward basic and acidic residues.

The protein belongs to the herpesviridae inner tegument protein family. Interacts (via C-terminus) with the large tegument protein/LTP (via N-terminus).

It localises to the virion tegument. Its subcellular location is the host cytoplasm. It is found in the host nucleus. The protein resides in the host Golgi apparatus. The protein localises to the host trans-Golgi network. Functionally, plays an essential role in cytoplasmic secondary envelopment during viral egress. Interacts with the capsid via the large tegument protein/LTP and participates in its transport to the host trans-Golgi network (TGN) where secondary envelopment occurs. Modulates tegumentation and capsid accumulation at the viral assembly complex. This chain is Inner tegument protein (UL47), found in Homo sapiens (Human).